Reading from the N-terminus, the 383-residue chain is Probable cell wall hydrolase LytN (383 aa).

The N-terminal stretch at 1–49 (MFVYYCKECFIMNKQQSKVRYSIRKVSIGILSISIGMFLALGMSNKAYA) is a signal peptide. In terms of domain architecture, LysM spans 175–219 (QIYTVKKGDTLSAIALKYKTTVSNIQNTNNIANPNLIFIGQKLKV). The Peptidase C51 domain occupies 241 to 378 (NSSTLNYLKT…NYENDMIFIR (138 aa)).

It localises to the secreted. Functionally, probably involved in peptidoglycan hydrolysis. The chain is Probable cell wall hydrolase LytN (lytN) from Staphylococcus aureus (strain MSSA476).